Here is a 249-residue protein sequence, read N- to C-terminus: Pyridoxine 5'-phosphate synthase (249 aa).

3-amino-2-oxopropyl phosphate is bound at residue Asn-7. Residue 9–10 (DH) participates in 1-deoxy-D-xylulose 5-phosphate binding. Arg-18 lines the 3-amino-2-oxopropyl phosphate pocket. His-43 functions as the Proton acceptor in the catalytic mechanism. 1-deoxy-D-xylulose 5-phosphate contacts are provided by Arg-45 and His-50. Glu-70 serves as the catalytic Proton acceptor. Thr-100 lines the 1-deoxy-D-xylulose 5-phosphate pocket. His-198 functions as the Proton donor in the catalytic mechanism. 3-amino-2-oxopropyl phosphate contacts are provided by residues Ala-199 and 220–221 (GH).

It belongs to the PNP synthase family. As to quaternary structure, homooctamer; tetramer of dimers.

The protein localises to the cytoplasm. The catalysed reaction is 3-amino-2-oxopropyl phosphate + 1-deoxy-D-xylulose 5-phosphate = pyridoxine 5'-phosphate + phosphate + 2 H2O + H(+). Its pathway is cofactor biosynthesis; pyridoxine 5'-phosphate biosynthesis; pyridoxine 5'-phosphate from D-erythrose 4-phosphate: step 5/5. Functionally, catalyzes the complicated ring closure reaction between the two acyclic compounds 1-deoxy-D-xylulose-5-phosphate (DXP) and 3-amino-2-oxopropyl phosphate (1-amino-acetone-3-phosphate or AAP) to form pyridoxine 5'-phosphate (PNP) and inorganic phosphate. This chain is Pyridoxine 5'-phosphate synthase, found in Azoarcus sp. (strain BH72).